The sequence spans 614 residues: Putative ankyrin repeat protein RBE_0997 (614 aa).

ANK repeat units follow at residues 3-32 (KDEE…DPNI), 36-65 (DDKP…NPNA), 69-98 (DGEP…DPNL), 102-131 (RKNT…NLNA), 135-164 (SGYP…NPNL), 168-197 (DGSP…NVEA), 201-231 (DGNT…DKEK), 239-268 (NGET…TVNI), and 272-301 (AGYT…ELKE). One can recognise a Glutamine amidotransferase type-1 domain in the interval 348–580 (NVEDIDYRKI…VQSAETFMNK (233 aa)). The active-site Nucleophile is the C444. Active-site residues include H547 and E549.

The sequence is that of Putative ankyrin repeat protein RBE_0997 from Rickettsia bellii (strain RML369-C).